We begin with the raw amino-acid sequence, 505 residues long: Lysine--tRNA ligase (505 aa).

Mg(2+) contacts are provided by Glu-415 and Glu-422.

The protein belongs to the class-II aminoacyl-tRNA synthetase family. As to quaternary structure, homodimer. Requires Mg(2+) as cofactor.

The protein localises to the cytoplasm. The catalysed reaction is tRNA(Lys) + L-lysine + ATP = L-lysyl-tRNA(Lys) + AMP + diphosphate. In Yersinia pseudotuberculosis serotype O:1b (strain IP 31758), this protein is Lysine--tRNA ligase.